Reading from the N-terminus, the 274-residue chain is 3-methyl-2-oxobutanoate hydroxymethyltransferase (274 aa).

Mg(2+)-binding residues include Asp-49 and Asp-88. Residues 49-50, Asp-88, and Lys-118 each bind 3-methyl-2-oxobutanoate; that span reads DS. Glu-120 contacts Mg(2+). The active-site Proton acceptor is Glu-187.

The protein belongs to the PanB family. In terms of assembly, homodecamer; pentamer of dimers. The cofactor is Mg(2+).

Its subcellular location is the cytoplasm. The enzyme catalyses 3-methyl-2-oxobutanoate + (6R)-5,10-methylene-5,6,7,8-tetrahydrofolate + H2O = 2-dehydropantoate + (6S)-5,6,7,8-tetrahydrofolate. Its pathway is cofactor biosynthesis; (R)-pantothenate biosynthesis; (R)-pantoate from 3-methyl-2-oxobutanoate: step 1/2. Catalyzes the reversible reaction in which hydroxymethyl group from 5,10-methylenetetrahydrofolate is transferred onto alpha-ketoisovalerate to form ketopantoate. The protein is 3-methyl-2-oxobutanoate hydroxymethyltransferase of Paramagnetospirillum magneticum (strain ATCC 700264 / AMB-1) (Magnetospirillum magneticum).